We begin with the raw amino-acid sequence, 373 residues long: 4-hydroxy-3-methylbut-2-en-1-yl diphosphate synthase (flavodoxin) (373 aa).

Residues Cys-270, Cys-273, Cys-305, and Glu-312 each contribute to the [4Fe-4S] cluster site.

The protein belongs to the IspG family. Requires [4Fe-4S] cluster as cofactor.

The catalysed reaction is (2E)-4-hydroxy-3-methylbut-2-enyl diphosphate + oxidized [flavodoxin] + H2O + 2 H(+) = 2-C-methyl-D-erythritol 2,4-cyclic diphosphate + reduced [flavodoxin]. Its pathway is isoprenoid biosynthesis; isopentenyl diphosphate biosynthesis via DXP pathway; isopentenyl diphosphate from 1-deoxy-D-xylulose 5-phosphate: step 5/6. Converts 2C-methyl-D-erythritol 2,4-cyclodiphosphate (ME-2,4cPP) into 1-hydroxy-2-methyl-2-(E)-butenyl 4-diphosphate. The sequence is that of 4-hydroxy-3-methylbut-2-en-1-yl diphosphate synthase (flavodoxin) from Sodalis glossinidius (strain morsitans).